We begin with the raw amino-acid sequence, 93 residues long: Large ribosomal subunit protein bL31B (93 aa).

This sequence belongs to the bacterial ribosomal protein bL31 family. Type B subfamily. As to quaternary structure, part of the 50S ribosomal subunit.

The polypeptide is Large ribosomal subunit protein bL31B (Pseudomonas syringae pv. tomato (strain ATCC BAA-871 / DC3000)).